The chain runs to 800 residues: Phenylalanine--tRNA ligase beta subunit (800 aa).

Residues Thr39–Val148 enclose the tRNA-binding domain. In terms of domain architecture, B5 spans Val402–Ala478. Asp456, Asp462, Glu465, and Glu466 together coordinate Mg(2+). The FDX-ACB domain occupies Ser706–Arg799.

This sequence belongs to the phenylalanyl-tRNA synthetase beta subunit family. Type 1 subfamily. Tetramer of two alpha and two beta subunits. The cofactor is Mg(2+).

It localises to the cytoplasm. It catalyses the reaction tRNA(Phe) + L-phenylalanine + ATP = L-phenylalanyl-tRNA(Phe) + AMP + diphosphate + H(+). In Rhodospirillum rubrum (strain ATCC 11170 / ATH 1.1.1 / DSM 467 / LMG 4362 / NCIMB 8255 / S1), this protein is Phenylalanine--tRNA ligase beta subunit.